The sequence spans 345 residues: NADH-quinone oxidoreductase subunit H (345 aa).

8 consecutive transmembrane segments (helical) span residues 15–35 (MLLQ…FMVY), 82–102 (FVYF…FVVI), 115–135 (VGIL…IMGG), 161–181 (LGLI…TAIV), 190–210 (LLNW…VSAL), 240–262 (YLLF…SLLF), 278–298 (WWMV…KAIV), and 309–329 (IGWK…AILA).

Belongs to the complex I subunit 1 family. In terms of assembly, NDH-1 is composed of at least 14 different subunits, Nqo1 to Nqo14. The complex has a L-shaped structure, with the hydrophobic arm (subunits Nqo7, Nqo8, Nqo10 to Nqo14) embedded in the inner membrane and the hydrophilic peripheral arm (subunits Nqo1 to Nqo6, Nqo9) protruding into the bacterial cytoplasm. The hydrophilic domain contains all the redox centers. NADH-quinone oxidoreductase forms a supercomplex with ubiquinol-cytochrome c reductase complex (complex III or cytochrome b-c1 complex) and cytochrome c oxidase (complex IV), which stabilizes the NADH-quinone oxidoreductase complex.

Its subcellular location is the cell inner membrane. The catalysed reaction is a quinone + NADH + 5 H(+)(in) = a quinol + NAD(+) + 4 H(+)(out). In terms of biological role, NDH-1 shuttles electrons from NADH, via FMN and iron-sulfur (Fe-S) centers, to quinones in the respiratory chain. The immediate electron acceptor for the enzyme in this species is believed to be ubiquinone. Couples the redox reaction to proton translocation (for every two electrons transferred, four hydrogen ions are translocated across the cytoplasmic membrane), and thus conserves the redox energy in a proton gradient. This subunit may bind ubiquinone. This is NADH-quinone oxidoreductase subunit H from Paracoccus denitrificans (strain Pd 1222).